The sequence spans 242 residues: Small ribosomal subunit protein uS2 (242 aa).

The protein belongs to the universal ribosomal protein uS2 family.

The sequence is that of Small ribosomal subunit protein uS2 from Tolumonas auensis (strain DSM 9187 / NBRC 110442 / TA 4).